Here is a 173-residue protein sequence, read N- to C-terminus: Crossover junction endodeoxyribonuclease RuvC (173 aa).

Active-site residues include aspartate 8, glutamate 67, and aspartate 139. Mg(2+) is bound by residues aspartate 8, glutamate 67, and aspartate 139.

It belongs to the RuvC family. Homodimer which binds Holliday junction (HJ) DNA. The HJ becomes 2-fold symmetrical on binding to RuvC with unstacked arms; it has a different conformation from HJ DNA in complex with RuvA. In the full resolvosome a probable DNA-RuvA(4)-RuvB(12)-RuvC(2) complex forms which resolves the HJ. Mg(2+) serves as cofactor.

It is found in the cytoplasm. It catalyses the reaction Endonucleolytic cleavage at a junction such as a reciprocal single-stranded crossover between two homologous DNA duplexes (Holliday junction).. The RuvA-RuvB-RuvC complex processes Holliday junction (HJ) DNA during genetic recombination and DNA repair. Endonuclease that resolves HJ intermediates. Cleaves cruciform DNA by making single-stranded nicks across the HJ at symmetrical positions within the homologous arms, yielding a 5'-phosphate and a 3'-hydroxyl group; requires a central core of homology in the junction. The consensus cleavage sequence is 5'-(A/T)TT(C/G)-3'. Cleavage occurs on the 3'-side of the TT dinucleotide at the point of strand exchange. HJ branch migration catalyzed by RuvA-RuvB allows RuvC to scan DNA until it finds its consensus sequence, where it cleaves and resolves the cruciform DNA. The sequence is that of Crossover junction endodeoxyribonuclease RuvC from Cronobacter sakazakii (strain ATCC BAA-894) (Enterobacter sakazakii).